The following is a 256-amino-acid chain: Adenylate kinase (256 aa).

45-50 (GAGKGT) is an ATP binding site. The segment at 67 to 96 (ATGDLLRQQVAMGTDLGKQAKKIMDQGALV) is NMP. AMP contacts are provided by residues Thr68, Arg73, 94 to 96 (ALV), 123 to 126 (GFPR), and Gln130. The segment at 164–201 (GRLIHPGSGRSYHKIFSPPKQPMKDDITGEPLVQRSDD) is LID. ATP-binding positions include Arg165 and 174-175 (SY). The AMP site is built by Arg198 and Arg209. Residue Gln237 participates in ATP binding.

It belongs to the adenylate kinase family. AK2 subfamily. As to quaternary structure, monomer.

It localises to the cytoplasm. The protein resides in the cytosol. It is found in the mitochondrion intermembrane space. It carries out the reaction AMP + ATP = 2 ADP. Catalyzes the reversible transfer of the terminal phosphate group between ATP and AMP. Plays an important role in cellular energy homeostasis and in adenine nucleotide metabolism. Adenylate kinase activity is critical for regulation of the phosphate utilization and the AMP de novo biosynthesis pathways. This Malassezia globosa (strain ATCC MYA-4612 / CBS 7966) (Dandruff-associated fungus) protein is Adenylate kinase.